The following is a 253-amino-acid chain: REF/SRPP-like protein Os05g0151300/LOC_Os05g05940 (253 aa).

Residues 1–26 are disordered; the sequence is MADSGSDAPISNRPEEEVTVEKTPEM. Over residues 13 to 26 the composition is skewed to basic and acidic residues; sequence RPEEEVTVEKTPEM.

Belongs to the REF/SRPP family.

This chain is REF/SRPP-like protein Os05g0151300/LOC_Os05g05940, found in Oryza sativa subsp. japonica (Rice).